The primary structure comprises 295 residues: Putative enoyl reductase C646.07c (295 aa).

At 1–84 (MSITLSSRGR…KDLGPQIGWR (84 aa)) the chain is on the cytoplasmic side. The chain crosses the membrane as a helical span at residues 85 to 105 (TVFMIEYLGPLVIHLFFILNY). At 106–157 (KWIYRKDYNLCLNQKIAFVLVMLHFMKREYESIFVHRFSLATMPLRNIFKNC) the chain is on the lumenal side. Residues 158–178 (AHYHLLSGLFLAYFIYGPWHA) form a helical membrane-spanning segment. The Cytoplasmic segment spans residues 179-186 (NDYIKPNH). A helical membrane pass occupies residues 187-207 (LLFLIVGWAFAVLSNFRTHII). Residues 208–223 (LRDLRPAGSKKRVIPT) lie on the Lumenal side of the membrane. Residues 224-246 (GYGFNLVSFPNYFFESLGWLFFA) traverse the membrane as a helical segment. Over 247 to 250 (LLTK) the chain is Cytoplasmic. Residues 251–268 (SWASWIFLFVGSAQMFVW) form a helical membrane-spanning segment. Residues 269-295 (AKKKHARYLKEFPNYPRSRKIMIPFFL) are Lumenal-facing.

The protein belongs to the steroid 5-alpha reductase family.

Its subcellular location is the endoplasmic reticulum membrane. It carries out the reaction a (2E)-enoyl-CoA + NADPH + H(+) = a 2,3-saturated acyl-CoA + NADP(+). The sequence is that of Putative enoyl reductase C646.07c from Schizosaccharomyces pombe (strain 972 / ATCC 24843) (Fission yeast).